The primary structure comprises 340 residues: MNVFEPRLSSWLENAGDDDDVVLSSRIRLARNLKDEQFPIYEQKEEIVDNIAEVFDDNFILIKMNQISLLQKALLVEKHLISPYMMNKSEYGAVLLNEEENVSIMLNEEDHLRIQCMTPGLRLFDALEAALQIDGYVEEKLSYAFDKEFGYLTSCVTNIGTGMRASVMVHLPGLVTTKRIKSVIEAIRSLGFVVRGIYGEGSMPASNIFQVSNQVTLGKTEAEIVEDLTQVMEQIIMQERVARTTLKQKFHIALEDRVFRSYGLLMNCRIISMKEAADAISDIRFGVELGFFEHISRQKMNELVLFSQPAFLRREAGRDMDELEEKVIRAKVIREILGDK.

The Phosphagen kinase C-terminal domain occupies Val21–Ala242. Residues Ser24–Arg28, His79, Arg113, Arg164–Met168, and Arg195–Glu200 contribute to the ATP site.

The protein belongs to the ATP:guanido phosphotransferase family.

It catalyses the reaction L-arginyl-[protein] + ATP = N(omega)-phospho-L-arginyl-[protein] + ADP + H(+). Catalyzes the specific phosphorylation of arginine residues in proteins. The polypeptide is Protein-arginine kinase (Listeria monocytogenes serovar 1/2a (strain ATCC BAA-679 / EGD-e)).